Consider the following 200-residue polypeptide: Pyridoxal 5'-phosphate synthase subunit PdxT (200 aa).

Residue Gly52–Ser54 participates in L-glutamine binding. Cys84 acts as the Nucleophile in catalysis. Residues Arg116 and Ile145–Arg146 contribute to the L-glutamine site. Catalysis depends on charge relay system residues His181 and Glu183.

This sequence belongs to the glutaminase PdxT/SNO family. In the presence of PdxS, forms a dodecamer of heterodimers. Only shows activity in the heterodimer.

It carries out the reaction aldehydo-D-ribose 5-phosphate + D-glyceraldehyde 3-phosphate + L-glutamine = pyridoxal 5'-phosphate + L-glutamate + phosphate + 3 H2O + H(+). The enzyme catalyses L-glutamine + H2O = L-glutamate + NH4(+). It functions in the pathway cofactor biosynthesis; pyridoxal 5'-phosphate biosynthesis. Functionally, catalyzes the hydrolysis of glutamine to glutamate and ammonia as part of the biosynthesis of pyridoxal 5'-phosphate. The resulting ammonia molecule is channeled to the active site of PdxS. The protein is Pyridoxal 5'-phosphate synthase subunit PdxT of Sulfurisphaera tokodaii (strain DSM 16993 / JCM 10545 / NBRC 100140 / 7) (Sulfolobus tokodaii).